A 261-amino-acid chain; its full sequence is Glucose 1-dehydrogenase (261 aa).

11–35 (VITGSSTGLGKSMAIRFATEKAKVV) is a binding site for NADP(+). Residue serine 145 coordinates substrate. Tyrosine 158 functions as the Proton acceptor in the catalytic mechanism.

Belongs to the short-chain dehydrogenases/reductases (SDR) family. As to quaternary structure, homotetramer.

It carries out the reaction D-glucose + NAD(+) = D-glucono-1,5-lactone + NADH + H(+). It catalyses the reaction D-glucose + NADP(+) = D-glucono-1,5-lactone + NADPH + H(+). This is Glucose 1-dehydrogenase from Priestia megaterium (Bacillus megaterium).